Here is a 31-residue protein sequence, read N- to C-terminus: Cytochrome b6-f complex subunit 6 (31 aa).

The helical transmembrane segment at 4 to 24 (LLSYFGLLLAALISTLVLFIG) threads the bilayer.

This sequence belongs to the PetL family. The 4 large subunits of the cytochrome b6-f complex are cytochrome b6, subunit IV (17 kDa polypeptide, PetD), cytochrome f and the Rieske protein, while the 4 small subunits are PetG, PetL, PetM and PetN. The complex functions as a dimer.

The protein localises to the plastid. It localises to the chloroplast thylakoid membrane. Its function is as follows. Component of the cytochrome b6-f complex, which mediates electron transfer between photosystem II (PSII) and photosystem I (PSI), cyclic electron flow around PSI, and state transitions. PetL is important for photoautotrophic growth as well as for electron transfer efficiency and stability of the cytochrome b6-f complex. In Psilotum nudum (Whisk fern), this protein is Cytochrome b6-f complex subunit 6.